Reading from the N-terminus, the 744-residue chain is MDEEELDHPNASPEKRYFPESLDSSDGDEEGVLACEDLELNPFDGLPYSSRYYKLLKEREELPIWKEKYSFMESLLQNQVVVVSGDSKCGKSSQVPQWCAEYCLSIHYQHGGVICTQAHKQTAVQLALRVADEMDVNIGHEVGYVIPFENCCTTETILRYCTDDMLQREMMSNPFLGSYGVIILDDVHERSLATDVLLGLLKDVLLARPELKLIVNCSPLLTSKLSSYYGDVPVIEVRNKHPVEVVYLSGAQKDSFESVIRLIFEIHRSGEKGDVVVFLACEQDIEKTYELVCQEGSNLNPDVGDLVVIPLYPKEKCSLFRPVDETEKRCQVYQRRVVLTTSCGESLIWSHTVKFVIDVGLERRQVYNPRIRANSLVLQPISQSQAEIRKQLLGSSPSGKLFCLYTEEFASKDMRPLKPAEMQEANLTSMVLFMKRVDIAGLGRCDFMNRPAPESLMQALEDLDYLAALDNDGNLSEFGIIMSEFPLDPQLSKSILASCEFDCVDEMLTIAAMVTAPSCFLHVPHGAEEAAVTCWKTFLHPEGDHFTLINVYNAYQDTVLNSANEHCVEMWCHDCFLSCSALRMADVIRAELLEIIKRIELPYAEPAFGSKENGLNIKKALLSGYFMQIARDVDGSGNYLMLTHKQVAQLHPLSSYSITKKMPEWVLFHQFSISENNYIRVASAVSPELFMQLVPQYYFSNLPPSESKDILQQAAGHLPTETVNKDQDVCDKCPDATEQRCTIQ.

M1 carries the N-acetylmethionine modification. A disordered region spans residues 1-28 (MDEEELDHPNASPEKRYFPESLDSSDGD). The 199-residue stretch at 72 to 270 (MESLLQNQVV…RLIFEIHRSG (199 aa)) folds into the Helicase ATP-binding domain. Position 85-92 (85-92 (GDSKCGKS)) interacts with ATP. The short motif at 185–188 (DDVH) is the DEAH box element. The region spanning 258-438 (SVIRLIFEIH…SMVLFMKRVD (181 aa)) is the Helicase C-terminal domain.

This sequence belongs to the DEAD box helicase family. DEAH subfamily.

The protein localises to the nucleus. It localises to the mitochondrion. It carries out the reaction ATP + H2O = ADP + phosphate + H(+). The sequence is that of Putative pre-mRNA-splicing factor ATP-dependent RNA helicase DHX32 (Dhx32) from Mus musculus (Mouse).